Consider the following 314-residue polypeptide: Olfactory receptor 51G2 (314 aa).

The Extracellular segment spans residues 1-30 (MTLGSLGNSSSSVSATFLLSGIPGLERMHI). A glycan (N-linked (GlcNAc...) asparagine) is linked at Asn-8. Residues 31-51 (WISIPLCFMYLVSIPGNCTIL) form a helical membrane-spanning segment. At 52–59 (FIIKTERS) the chain is on the cytoplasmic side. A helical membrane pass occupies residues 60-80 (LHEPMYLFLSMLALIDLGLSL). Over 81–104 (CTLPTVLGIFWVGAREISHDACFA) the chain is Extracellular. An intrachain disulfide couples Cys-102 to Cys-194. A helical transmembrane segment spans residues 105–125 (QLFFIHCFSFLESSVLLSMAF). Over 126–144 (DRFVAICHPLHYVSILTNT) the chain is Cytoplasmic. Residues 145–165 (VIGRIGLVSLGRSVALIFPLP) form a helical membrane-spanning segment. The Extracellular segment spans residues 166–201 (FMLKRFPYCGSPVLSHSYCLHQEVMKLACADMKANS). Residues 202 to 222 (IYGMFVIVSTVGIDSLLILFS) traverse the membrane as a helical segment. Over 223 to 242 (YALILRTVLSIASRAERFKA) the chain is Cytoplasmic. Residues 243-263 (LNTCVSHICAVLLFYTPMIGL) traverse the membrane as a helical segment. Residues 264 to 278 (SVIHRFGKQAPHLVQ) are Extracellular-facing. A helical transmembrane segment spans residues 279-299 (VVMGFMYLLFPPVMNPIVYSV). At 300 to 314 (KTKQIRDRVTHAFCY) the chain is on the cytoplasmic side.

It belongs to the G-protein coupled receptor 1 family.

The protein resides in the cell membrane. Its function is as follows. Odorant receptor. The protein is Olfactory receptor 51G2 (OR51G2) of Homo sapiens (Human).